The chain runs to 364 residues: Nicotinate-nucleotide--dimethylbenzimidazole phosphoribosyltransferase (364 aa).

The active-site Proton acceptor is glutamate 332.

This sequence belongs to the CobT family.

It carries out the reaction 5,6-dimethylbenzimidazole + nicotinate beta-D-ribonucleotide = alpha-ribazole 5'-phosphate + nicotinate + H(+). The protein operates within nucleoside biosynthesis; alpha-ribazole biosynthesis; alpha-ribazole from 5,6-dimethylbenzimidazole: step 1/2. Catalyzes the synthesis of alpha-ribazole-5'-phosphate from nicotinate mononucleotide (NAMN) and 5,6-dimethylbenzimidazole (DMB). The chain is Nicotinate-nucleotide--dimethylbenzimidazole phosphoribosyltransferase from Salinispora tropica (strain ATCC BAA-916 / DSM 44818 / JCM 13857 / NBRC 105044 / CNB-440).